Consider the following 521-residue polypeptide: Probable protein kinase UbiB (521 aa).

Residues 119-497 form the Protein kinase domain; the sequence is SFEREPVASA…QKLTNRLLQA (379 aa). Residues 125 to 133 and K151 each bind ATP; that span reads VASASIAQV. D286 functions as the Proton acceptor in the catalytic mechanism. Residues 496-516 form a helical membrane-spanning segment; it reads QAIVSAGIGFVIALILLQLVV.

The protein belongs to the ABC1 family. UbiB subfamily.

It is found in the cell inner membrane. The protein operates within cofactor biosynthesis; ubiquinone biosynthesis [regulation]. Its function is as follows. Is probably a protein kinase regulator of UbiI activity which is involved in aerobic coenzyme Q (ubiquinone) biosynthesis. This Delftia acidovorans (strain DSM 14801 / SPH-1) protein is Probable protein kinase UbiB.